The primary structure comprises 160 residues: Large ribosomal subunit protein uL22c (160 aa).

It belongs to the universal ribosomal protein uL22 family. As to quaternary structure, part of the 50S ribosomal subunit.

The protein localises to the plastid. It is found in the chloroplast. Functionally, this protein binds specifically to 23S rRNA. The globular domain of the protein is located near the polypeptide exit tunnel on the outside of the subunit, while an extended beta-hairpin is found that lines the wall of the exit tunnel in the center of the 70S ribosome. The sequence is that of Large ribosomal subunit protein uL22c (rpl22) from Arabis hirsuta (Hairy rock-cress).